A 563-amino-acid polypeptide reads, in one-letter code: F-box/kelch-repeat protein At5g42350 (563 aa).

The region spanning 129 to 175 is the F-box domain; that stretch reads YRKHVYLPDDILEMCLMRLPLTSLLNAHLVCKKWQSMANTQRFLQMR. Kelch repeat units follow at residues 184–231, 232–282, and 355–402; these read WLFL…SIHE, EIYI…ATEV, and VLIA…IICN.

In Arabidopsis thaliana (Mouse-ear cress), this protein is F-box/kelch-repeat protein At5g42350.